A 456-amino-acid chain; its full sequence is Kynurenine 3-monooxygenase (456 aa).

This sequence belongs to the aromatic-ring hydroxylase family. KMO subfamily. FAD is required as a cofactor.

Its subcellular location is the mitochondrion outer membrane. It carries out the reaction L-kynurenine + NADPH + O2 + H(+) = 3-hydroxy-L-kynurenine + NADP(+) + H2O. The protein operates within cofactor biosynthesis; NAD(+) biosynthesis; quinolinate from L-kynurenine: step 1/3. Functionally, catalyzes the hydroxylation of L-kynurenine (L-Kyn) to form 3-hydroxy-L-kynurenine (L-3OHKyn). Required for synthesis of quinolinic acid. This chain is Kynurenine 3-monooxygenase, found in Candida albicans (strain SC5314 / ATCC MYA-2876) (Yeast).